Here is a 111-residue protein sequence, read N- to C-terminus: Translation initiation factor 1A (111 aa).

Basic residues predominate over residues 1–13 (MKKSNNKNNHKNN). The tract at residues 1-30 (MKKSNNKNNHKNNHNNNQGGENIRVRSPRR) is disordered. The S1-like domain maps to 23 to 96 (IRVRSPRRGE…EKADVIWRYT (74 aa)).

Belongs to the eIF-1A family.

Its function is as follows. Seems to be required for maximal rate of protein biosynthesis. Enhances ribosome dissociation into subunits and stabilizes the binding of the initiator Met-tRNA(I) to 40 S ribosomal subunits. This Methanosphaera stadtmanae (strain ATCC 43021 / DSM 3091 / JCM 11832 / MCB-3) protein is Translation initiation factor 1A.